We begin with the raw amino-acid sequence, 513 residues long: ATP synthase subunit alpha (513 aa).

169-176 (GDRQTGKT) is a binding site for ATP.

Belongs to the ATPase alpha/beta chains family. As to quaternary structure, F-type ATPases have 2 components, CF(1) - the catalytic core - and CF(0) - the membrane proton channel. CF(1) has five subunits: alpha(3), beta(3), gamma(1), delta(1), epsilon(1). CF(0) has three main subunits: a(1), b(2) and c(9-12). The alpha and beta chains form an alternating ring which encloses part of the gamma chain. CF(1) is attached to CF(0) by a central stalk formed by the gamma and epsilon chains, while a peripheral stalk is formed by the delta and b chains.

It is found in the cell inner membrane. It catalyses the reaction ATP + H2O + 4 H(+)(in) = ADP + phosphate + 5 H(+)(out). Functionally, produces ATP from ADP in the presence of a proton gradient across the membrane. The alpha chain is a regulatory subunit. This chain is ATP synthase subunit alpha, found in Bordetella petrii (strain ATCC BAA-461 / DSM 12804 / CCUG 43448).